A 271-amino-acid chain; its full sequence is uncharacterized protein (271 aa).

3 Solcar repeats span residues 3-74 (VQTL…AKRR), 81-163 (EGAI…SKKY), and 171-268 (DISV…FKSK). 6 helical membrane-spanning segments follow: residues 5–26 (TLMA…IDTI), 49–69 (GLPI…STYV), 84–104 (ILYS…WTPL), 138–158 (GYWM…VCYE), 170–190 (WDIS…ATTI), and 240–261 (FTRG…SMSV).

This sequence belongs to the mitochondrial carrier (TC 2.A.29) family.

It is found in the mitochondrion inner membrane. This is an uncharacterized protein from Schizosaccharomyces pombe (strain 972 / ATCC 24843) (Fission yeast).